Here is a 258-residue protein sequence, read N- to C-terminus: F-box/SPRY domain-containing protein 1 (258 aa).

In terms of domain architecture, F-box spans 6 to 54 (MEYAPNIPDNVLELIFSFLKLQDLRNCTLVCKSWYRFFCDENNEVWRAQ). The B30.2/SPRY domain occupies 64–256 (FKNDLLTVVP…ISMVYLGAPL (193 aa)).

This sequence belongs to the FBXO45/Fsn family. Component of an E3 ubiquitin ligase complex composed of hiw and Fsn.

It localises to the synapse. It functions in the pathway protein modification; protein ubiquitination. Required in the presynaptic motoneuron to down-regulate the levels of wnd and restrain synaptic terminal growth at the neuromuscular junction (NMJ). This chain is F-box/SPRY domain-containing protein 1, found in Anopheles gambiae (African malaria mosquito).